The following is a 199-amino-acid chain: Prostatic spermine-binding protein (199 aa).

The N-terminal stretch at 1–18 (MLLLLTLAFLASPTCRAQ) is a signal peptide. The Jacalin-type lectin domain maps to 19 to 151 (NVLGNAAGKY…VRGIGFKWGN (133 aa)). The N-linked (GlcNAc...) asparagine glycan is linked to asparagine 62. Residues 159–199 (HYNNKEDKADNKDADNKDADNKDDGDEDDDGNDDDDQKDES) form a disordered region. Positions 160–180 (YNNKEDKADNKDADNKDADNK) are enriched in basic and acidic residues. Positions 181-199 (DDGDEDDDGNDDDDQKDES) are enriched in acidic residues.

The protein to rat SBP. In terms of tissue distribution, prostate.

Its function is as follows. This protein seems to be functional equivalent to rat prostatic spermine-binding protein, which is involved in polyamine binding. In Mus musculus (Mouse), this protein is Prostatic spermine-binding protein (Sbp).